A 400-amino-acid polypeptide reads, in one-letter code: Unsaturated glucuronyl hydrolase (400 aa).

Positions 1–20 are cleaved as a signal peptide; that stretch reads MRKLVYLVLVLGLTFLNVRC. The Nucleophile role is filled by aspartate 120. The active-site Proton donor is aspartate 181.

The protein belongs to the glycosyl hydrolase 88 family.

It is found in the cell surface. Its function is as follows. Unsaturated glucuronyl hydrolase involved in ulvan degradation. Ulvan is the main polysaccharide component of the Ulvales (green seaweed) cell wall. It is composed of disaccharide building blocks comprising 3-sulfated rhamnose (Rha3S) linked to D-glucuronic acid (GlcA), L-iduronic acid (IduA), or D-xylose (Xyl). Unsaturated glucuronyl hydrolase catalyzes the cleavage of the unsaturated 4-deoxy-L-threo-hex-4-enopyranosiduronic acid (deltaUA) at the non-reducing end of ulvan oligomers, thus forming 5-dehydro-4-deoxy-D-glucuronate. The protein is Unsaturated glucuronyl hydrolase of Formosa agariphila (strain DSM 15362 / KCTC 12365 / LMG 23005 / KMM 3901 / M-2Alg 35-1).